The primary structure comprises 54 residues: Ovomucoid (54 aa).

Residues valine 4 to cysteine 54 form the Kazal-like domain. Intrachain disulfides connect cysteine 6–cysteine 36, cysteine 14–cysteine 33, and cysteine 22–cysteine 54. Asparagine 43 is a glycosylation site (N-linked (GlcNAc...) asparagine).

It is found in the secreted. In Carpococcyx renauldi (Coral-billed ground-cuckoo), this protein is Ovomucoid.